The primary structure comprises 118 residues: Large ribosomal subunit protein bL20 (118 aa).

Belongs to the bacterial ribosomal protein bL20 family.

In terms of biological role, binds directly to 23S ribosomal RNA and is necessary for the in vitro assembly process of the 50S ribosomal subunit. It is not involved in the protein synthesizing functions of that subunit. This chain is Large ribosomal subunit protein bL20, found in Elusimicrobium minutum (strain Pei191).